A 602-amino-acid polypeptide reads, in one-letter code: Sulfite reductase [NADPH] flavoprotein alpha-component (602 aa).

Residues 68–206 (ITIISASQTG…NYIQWSEELL (139 aa)) enclose the Flavodoxin-like domain. Residues 74-79 (SQTGNA), 121-124 (STQG), and 157-166 (LGDVSYNLFC) contribute to the FMN site. In terms of domain architecture, FAD-binding FR-type spans 237–451 (YKPAVATVLL…VEEKSNFRLP (215 aa)). Residues threonine 325, lysine 359, 389–392 (RLYS), 407–409 (TVG), and 422–425 (GGSS) each bind FAD. Residues 522 to 523 (SR), 528 to 532 (KIYVQ), and aspartate 564 contribute to the NADP(+) site. An FAD-binding site is contributed by tyrosine 602.

It belongs to the NADPH-dependent sulphite reductase flavoprotein subunit CysJ family. In the N-terminal section; belongs to the flavodoxin family. The protein in the C-terminal section; belongs to the flavoprotein pyridine nucleotide cytochrome reductase family. As to quaternary structure, alpha(8)-beta(8). The alpha component is a flavoprotein, the beta component is a hemoprotein. FAD serves as cofactor. Requires FMN as cofactor.

The enzyme catalyses hydrogen sulfide + 3 NADP(+) + 3 H2O = sulfite + 3 NADPH + 4 H(+). It functions in the pathway sulfur metabolism; hydrogen sulfide biosynthesis; hydrogen sulfide from sulfite (NADPH route): step 1/1. Its function is as follows. Component of the sulfite reductase complex that catalyzes the 6-electron reduction of sulfite to sulfide. This is one of several activities required for the biosynthesis of L-cysteine from sulfate. The flavoprotein component catalyzes the electron flow from NADPH -&gt; FAD -&gt; FMN to the hemoprotein component. In Buchnera aphidicola subsp. Schizaphis graminum (strain Sg), this protein is Sulfite reductase [NADPH] flavoprotein alpha-component.